A 138-amino-acid chain; its full sequence is uncharacterized protein (138 aa).

A helical membrane pass occupies residues 11 to 33 (ILLGLTLSLTFLYPLIITLIILY).

The protein resides in the membrane. This is an uncharacterized protein from Aquifex aeolicus (strain VF5).